The chain runs to 65 residues: Large ribosomal subunit protein uL29 (65 aa).

It belongs to the universal ribosomal protein uL29 family.

This chain is Large ribosomal subunit protein uL29 (rpmC), found in Borreliella burgdorferi (strain ATCC 35210 / DSM 4680 / CIP 102532 / B31) (Borrelia burgdorferi).